Consider the following 113-residue polypeptide: uncharacterized protein (113 aa).

The HTH hxlR-type domain occupies 16-113 (TPFGYTLSLI…CEWGVKNQNN (98 aa)).

This is an uncharacterized protein from Halalkalibacterium halodurans (strain ATCC BAA-125 / DSM 18197 / FERM 7344 / JCM 9153 / C-125) (Bacillus halodurans).